The following is a 273-amino-acid chain: TIP41-like protein (273 aa).

It belongs to the TIP41 family.

The protein localises to the cytoplasm. Its function is as follows. May be a regulator of serine/threonine-protein phosphatases 2A (PP2A) and 4 (PP4). The sequence is that of TIP41-like protein (tiprl) from Xenopus tropicalis (Western clawed frog).